Consider the following 132-residue polypeptide: Small ribosomal subunit protein uS8 (132 aa).

Belongs to the universal ribosomal protein uS8 family. In terms of assembly, part of the 30S ribosomal subunit. Contacts proteins S5 and S12.

Its function is as follows. One of the primary rRNA binding proteins, it binds directly to 16S rRNA central domain where it helps coordinate assembly of the platform of the 30S subunit. This is Small ribosomal subunit protein uS8 from Clostridioides difficile (strain 630) (Peptoclostridium difficile).